The sequence spans 435 residues: uncharacterized protein (435 aa).

WD repeat units follow at residues 105 to 149, 164 to 204, and 207 to 247; these read DLEY…GIDS, HNNA…SKTQ, and AHDK…HSTI. Residue S266 is modified to Phosphoserine. The stretch at 313-353 is one WD 4 repeat; the sequence is GHKGDVNAVKWMPGSKSKLATCGDDCVVSLWDLDQPVNPSP. A disordered region spans residues 352-371; the sequence is SPAPTLSVSGTTPGMTGSTS. The span at 358–371 shows a compositional bias: low complexity; that stretch reads SVSGTTPGMTGSTS. The residue at position 388 (S388) is a Phosphoserine.

It localises to the cytoplasm. The protein resides in the golgi apparatus. This is an uncharacterized protein from Schizosaccharomyces pombe (strain 972 / ATCC 24843) (Fission yeast).